Here is a 489-residue protein sequence, read N- to C-terminus: uncharacterized protein (489 aa).

Thr-26 is modified (phosphothreonine). Position 27 is a phosphoserine (Ser-27). The next 3 membrane-spanning stretches (helical) occupy residues 63 to 83 (IVYL…IEFA), 182 to 202 (LVWS…ILCA), and 221 to 241 (VFKL…IAFL). 3 disordered regions span residues 260–312 (PKTS…APLE), 401–435 (STLL…VPPS), and 450–489 (PSIN…PVVH). Position 263 is a phosphoserine (Ser-263). The segment covering 268 to 282 (QRGTSSSQPSENDAN) has biased composition (polar residues). Over residues 450–465 (PSINNVGGSTAPSVNN) the composition is skewed to polar residues. Residues 477-489 (SRSSTLTERPVVH) show a composition bias toward low complexity.

The protein resides in the endoplasmic reticulum membrane. This is an uncharacterized protein from Schizosaccharomyces pombe (strain 972 / ATCC 24843) (Fission yeast).